The following is a 1468-amino-acid chain: Potassium channel K2 (1468 aa).

Helical transmembrane passes span 48–68 (MIYI…YWIY), 146–165 (FNCY…WYIS), 185–209 (IYIY…IISY), 221–240 (LLID…RHFF), 246–264 (IDIY…FLNV), and 285–306 (IILG…IQGI). The pore-forming intramembrane region spans 326–344 (YFYFSIISISTVGYGDIIP). The chain crosses the membrane as a helical span at residues 351 to 368 (VICIFFIFWTFIWVPIQF). The interval 804–823 (TCARTNESHKNNRLRSRRSQ) is disordered. Positions 814–823 (NNRLRSRRSQ) are enriched in basic residues. Residues 1141-1185 (KSNKNSNNNNKCEQIKQLNNNLTFKKNEKKTKSNKQNTNDTLERR) adopt a coiled-coil conformation.

The protein resides in the membrane. Its function is as follows. May be involved in transmembrane potassium transport at the subcellular level not affecting bulk potassium transport across the plasma membrane. This chain is Potassium channel K2, found in Plasmodium berghei (strain Anka).